The sequence spans 460 residues: A-type ATP synthase subunit B (460 aa).

The protein belongs to the ATPase alpha/beta chains family. In terms of assembly, has multiple subunits with at least A(3), B(3), C, D, E, F, H, I and proteolipid K(x).

It localises to the cell membrane. Its function is as follows. Component of the A-type ATP synthase that produces ATP from ADP in the presence of a proton gradient across the membrane. The B chain is a regulatory subunit. This is A-type ATP synthase subunit B from Thermofilum pendens (strain DSM 2475 / Hrk 5).